Here is a 288-residue protein sequence, read N- to C-terminus: Probable pectinesterase 56 (288 aa).

The signal sequence occupies residues 1–27 (MAMTSTMQLLVLSFLVIASLFLGATVA). 2 N-linked (GlcNAc...) asparagine glycosylation sites follow: N55 and N95. Substrate-binding residues include T120 and Q150. D173 (proton donor) is an active-site residue. D194 functions as the Nucleophile in the catalytic mechanism. A glycan (N-linked (GlcNAc...) asparagine) is linked at N242. Residues R262 and W264 each coordinate substrate.

The protein belongs to the pectinesterase family.

The protein localises to the secreted. It is found in the cell wall. It catalyses the reaction [(1-&gt;4)-alpha-D-galacturonosyl methyl ester](n) + n H2O = [(1-&gt;4)-alpha-D-galacturonosyl](n) + n methanol + n H(+). Its pathway is glycan metabolism; pectin degradation; 2-dehydro-3-deoxy-D-gluconate from pectin: step 1/5. In terms of biological role, acts in the modification of cell walls via demethylesterification of cell wall pectin. This Arabidopsis thaliana (Mouse-ear cress) protein is Probable pectinesterase 56 (PME56).